We begin with the raw amino-acid sequence, 362 residues long: Adenosine deaminase (362 aa).

Zn(2+)-binding residues include histidine 19 and histidine 21. Residues histidine 21, aspartate 23, and glycine 181 each contribute to the substrate site. Residue histidine 208 coordinates Zn(2+). The active-site Proton donor is the glutamate 211. Position 300 (aspartate 300) interacts with Zn(2+).

This sequence belongs to the metallo-dependent hydrolases superfamily. Adenosine and AMP deaminases family. Adenosine deaminase subfamily. Requires Zn(2+) as cofactor.

It carries out the reaction adenosine + H2O + H(+) = inosine + NH4(+). The catalysed reaction is 2'-deoxyadenosine + H2O + H(+) = 2'-deoxyinosine + NH4(+). Its function is as follows. Catalyzes the hydrolytic deamination of adenosine and 2-deoxyadenosine. In Mycobacterium sp. (strain MCS), this protein is Adenosine deaminase.